Consider the following 131-residue polypeptide: MSWQAYVDDHLMCDIDGHHLTAAAILGHDGSVWAQSSTFPKFKPEEITAIMKDFDEPGSLAPTGLHLGGTKYMVIQGEGGAVIRGKKGSGGVTVKKTSQALVFGIYEEPLTPGQCNMIVERLGDYLIDQGL.

This sequence belongs to the profilin family. As to quaternary structure, occurs in many kinds of cells as a complex with monomeric actin in a 1:1 ratio.

It localises to the cytoplasm. It is found in the cytoskeleton. Binds to actin and affects the structure of the cytoskeleton. At high concentrations, profilin prevents the polymerization of actin, whereas it enhances it at low concentrations. By binding to PIP2, it inhibits the formation of IP3 and DG. The chain is Profilin from Pyrus communis (Pear).